A 412-amino-acid polypeptide reads, in one-letter code: DnaJ homolog subfamily A member 2 (412 aa).

A J domain is found at 8–70; sequence KLYDILGVPP…EKRELYDRYG (63 aa). K39 bears the N6-acetyllysine mark. 2 positions are modified to phosphoserine: S78 and S123. A CR-type zinc finger spans residues 130–214; it reads GKTTKLQLSK…CEGKKVIKEV (85 aa). K134 participates in a covalent cross-link: Glycyl lysine isopeptide (Lys-Gly) (interchain with G-Cter in SUMO2). 2 residues coordinate Zn(2+): C143 and C146. The CXXCXGXG motif repeat unit spans residues 143–150; it reads CSACSGQG. The residue at position 152 (K152) is an N6-acetyllysine. C159, C162, C186, C189, C202, and C205 together coordinate Zn(2+). CXXCXGXG motif repeat units lie at residues 159–166, 186–193, and 202–209; these read CSACRGRG, CSDCNGEG, and CKKCEGKK. The interval 365 to 412 is disordered; the sequence is IGETEEVELQEFDSTRGSGGGQRREAYNDSSDEESSSHHGPGVQCAHQ. The residue at position 391 (Y391) is a Phosphotyrosine. Residues S394 and S395 each carry the phosphoserine modification. C409 is subject to Cysteine methyl ester. Residue C409 is the site of S-farnesyl cysteine attachment. The propeptide at 410–412 is removed in mature form; the sequence is AHQ.

The protein resides in the membrane. In terms of biological role, co-chaperone of Hsc70. Stimulates ATP hydrolysis and the folding of unfolded proteins mediated by HSPA1A/B (in vitro). The chain is DnaJ homolog subfamily A member 2 (DNAJA2) from Homo sapiens (Human).